Consider the following 70-residue polypeptide: uncharacterized protein (70 aa).

The helical transmembrane segment at 15-37 (LLVSSISESAVALIIITIRILFS) threads the bilayer.

The protein localises to the membrane. This is an uncharacterized protein from Saccharomyces cerevisiae (strain ATCC 204508 / S288c) (Baker's yeast).